The chain runs to 84 residues: Small ribosomal subunit protein bS20 (84 aa).

The tract at residues 1–22 is disordered; that stretch reads MPAPTKRERQNRKRFERNRSVR. A compositionally biased stretch (basic residues) spans 9–22; the sequence is RQNRKRFERNRSVR.

The protein belongs to the bacterial ribosomal protein bS20 family.

Functionally, binds directly to 16S ribosomal RNA. This Rubrobacter xylanophilus (strain DSM 9941 / JCM 11954 / NBRC 16129 / PRD-1) protein is Small ribosomal subunit protein bS20.